A 637-amino-acid chain; its full sequence is Limonene/alpha-pinene synthase, chloroplastic (637 aa).

The N-terminal 56 residues, 1 to 56 (MALLSIVSLQVPKSCGLKSLISSSNVQKALCISTAVPTLRMRRRQKALVINMKLTT), are a transit peptide targeting the chloroplast. Asp388, Asp392, and Asp540 together coordinate Mg(2+). Positions 388–392 (DDMYD) match the DDXXD motif motif.

This sequence belongs to the terpene synthase family. Tpsd subfamily. Mg(2+) serves as cofactor. The cofactor is Mn(2+). It depends on K(+) as a cofactor.

The protein resides in the plastid. It localises to the chloroplast. The catalysed reaction is (2E)-geranyl diphosphate = (4S)-limonene + diphosphate. The enzyme catalyses (2E)-geranyl diphosphate = (1S,5S)-alpha-pinene + diphosphate. It functions in the pathway terpene metabolism; oleoresin biosynthesis. Involved in defensive oleoresin formation in conifers in response to insect attack or other injury. Involved in monoterpene (C10) olefins biosynthesis. In Abies grandis (Grand fir), this protein is Limonene/alpha-pinene synthase, chloroplastic (ag11).